A 400-amino-acid polypeptide reads, in one-letter code: MEWNGLKMIISTMEPQVSNGPTSNTSNGPSSNSRNCPSPMQTGAATDDSKTNLIVNYLPQNMTQEEFRSLFGSIGEIESCKLVRDKITGTQFEEHFKDLATGTKWKPLTEEGPIFGKGQSLGYGFVNYIDPKDAEKAINTLNGLRLQTKTIKVSYARPSSASIRDANLYVSGLPKTMTQKELEQLFSQYGRIITSRILVDQVTGVSRGVGFIRFDKRIEAEEAIKGLNGQKPSGAAEPITVKFANNPSQKTSQALLSQLYQSPNRRYPGPLHHQAQRFRLDNLLNMAYGVKRFSPITIDGMTSLVGMNIPGHTGTGWCIFVYNLSPDSDESVLWQLFGPFGAVNNVKVIRDFNTNKCKGFGFVTMTNYDEAAMAIASLNGYRLGDRVLQVSFKTNKTHKS.

A disordered region spans residues 12-48 (TMEPQVSNGPTSNTSNGPSSNSRNCPSPMQTGAATDD). The segment covering 18–33 (SNGPTSNTSNGPSSNS) has biased composition (low complexity). Positions 34 to 44 (RNCPSPMQTGA) are enriched in polar residues. 3 RRM domains span residues 51 to 158 (TNLI…YARP), 166 to 246 (ANLY…FANN), and 317 to 395 (WCIF…FKTN).

It belongs to the RRM elav family.

The protein localises to the cytoplasm. It localises to the perikaryon. Its subcellular location is the cell projection. It is found in the axon. The protein resides in the dendrite. The protein localises to the growth cone. RNA-binding protein that is involved in the post-transcriptional regulation of mRNAs. Plays a role in the regulation of mRNA stability, alternative splicing and translation. Binds to AU-rich element (ARE) sequences in the 3' untranslated region (3'UTR) of target mRNAs. Mainly plays a role in neuron-specific RNA processing. The sequence is that of ELAV-like protein 4 (elavl4) from Xenopus tropicalis (Western clawed frog).